The following is a 308-amino-acid chain: Putative S-adenosyl-L-methionine-dependent methyltransferase MAB_4584c (308 aa).

S-adenosyl-L-methionine is bound by residues Asp131 and Asp160–Leu161.

Belongs to the UPF0677 family.

Its function is as follows. Exhibits S-adenosyl-L-methionine-dependent methyltransferase activity. The protein is Putative S-adenosyl-L-methionine-dependent methyltransferase MAB_4584c of Mycobacteroides abscessus (strain ATCC 19977 / DSM 44196 / CCUG 20993 / CIP 104536 / JCM 13569 / NCTC 13031 / TMC 1543 / L948) (Mycobacterium abscessus).